Consider the following 464-residue polypeptide: Spore coat protein SP65 (464 aa).

A signal peptide spans 1–17 (MKVLLLLVCLVFAYVNA). The 23-residue stretch at 21-43 (ACYNVVCPSNYQCRAEGDQAYCV) folds into the Follistatin-like 1 domain. Residue Asn-111 is glycosylated (N-linked (GlcNAc...) asparagine). Follistatin-like domains are found at residues 121–143 (VCRD…PHCV) and 151–173 (LCRV…PTCL). Asn-247 carries an N-linked (GlcNAc...) asparagine glycan. The segment at 250–320 (STTGATTGAT…STTGAATTAP (71 aa)) is disordered.

In terms of assembly, binds to the C-terminal region of pspB.

It is found in the spore wall. Functionally, forms a triad with cellulose and pspB that is essential for spore outer layer formation. The sequence is that of Spore coat protein SP65 (cotE) from Dictyostelium discoideum (Social amoeba).